The chain runs to 306 residues: N-acetylmuramic acid 6-phosphate etherase (306 aa).

Residues 60–223 (TAAALRGGGR…STGAMVRLGK (164 aa)) form the SIS domain. The active-site Proton donor is glutamate 88. Residue glutamate 119 is part of the active site.

It belongs to the GCKR-like family. MurNAc-6-P etherase subfamily. As to quaternary structure, homodimer.

The enzyme catalyses N-acetyl-D-muramate 6-phosphate + H2O = N-acetyl-D-glucosamine 6-phosphate + (R)-lactate. It participates in amino-sugar metabolism; N-acetylmuramate degradation. Its function is as follows. Specifically catalyzes the cleavage of the D-lactyl ether substituent of MurNAc 6-phosphate, producing GlcNAc 6-phosphate and D-lactate. This is N-acetylmuramic acid 6-phosphate etherase from Gloeobacter violaceus (strain ATCC 29082 / PCC 7421).